Consider the following 718-residue polypeptide: Cyclomaltodextrin glucanotransferase (718 aa).

Positions 1-34 (MFQMAKRAFLSTTLTLGLLAGSALPFLPASAAYA) are cleaved as a signal peptide. An A1 region spans residues 35 to 172 (DPDIAVTNKQ…GIKIIIDFAP (138 aa)). Residues Asp61, Asn63, Asn66, and Asn67 each contribute to the Ca(2+) site. Cys77 and Cys84 are oxidised to a cystine. Ca(2+) contacts are provided by Gly85 and Asp87. 134–135 (YW) contacts substrate. Asn173 contributes to the Ca(2+) binding site. Residues 173 to 236 (NHTSPAMETD…NLYDLADFNH (64 aa)) are b. Substrate is bound at residue His174. Residue Ile224 participates in Ca(2+) binding. Substrate is bound at residue 227-230 (NLYD). Residue Asp233 coordinates Ca(2+). The tract at residues 237–440 (NNATIDKYFK…LRKSNPAIAY (204 aa)) is A2. Arg261 provides a ligand contact to substrate. Asp263 functions as the Nucleophile in the catalytic mechanism. A substrate-binding site is contributed by 266 to 267 (KH). His267 provides a ligand contact to Ca(2+). The active-site Proton donor is Glu291. The substrate site is built by His361, Asp405, and Arg409. Residues 441 to 528 (GSTQQRWINN…ATAVWQYTAA (88 aa)) form a c region. The d stretch occupies residues 529-614 (ETTPTIGHVG…SNAYNHFTIL (86 aa)). Residues 532–612 (PTIGHVGPVM…VNSNAYNHFT (81 aa)) form the IPT/TIG domain. The CBM20 domain maps to 613-718 (ILTGDQVTVR…GTATVTVNWQ (106 aa)). Residues 615–718 (TGDQVTVRFV…GTATVTVNWQ (104 aa)) are e.

This sequence belongs to the glycosyl hydrolase 13 family. Monomer. Ca(2+) serves as cofactor.

Its subcellular location is the secreted. The catalysed reaction is Cyclizes part of a (1-&gt;4)-alpha-D-glucan chain by formation of a (1-&gt;4)-alpha-D-glucosidic bond.. The protein is Cyclomaltodextrin glucanotransferase (cgt) of Bacillus sp. (strain 6.6.3).